We begin with the raw amino-acid sequence, 144 residues long: Large ribosomal subunit protein uL15 (144 aa).

A disordered region spans residues 1–58 (MNLSNLRAPRKANEKKKRVGRGMGSGMGKTSARGHKGQRSRSGSRMMRGFEGGQMPLH). Residues 8 to 20 (APRKANEKKKRVG) are compositionally biased toward basic residues. The span at 40–49 (SRSGSRMMRG) shows a compositional bias: low complexity.

Belongs to the universal ribosomal protein uL15 family. In terms of assembly, part of the 50S ribosomal subunit.

In terms of biological role, binds to the 23S rRNA. In Koribacter versatilis (strain Ellin345), this protein is Large ribosomal subunit protein uL15.